A 135-amino-acid polypeptide reads, in one-letter code: Small ribosomal subunit protein uS9 (135 aa).

A disordered region spans residues 96-135 (SADNRKPLKTEGHLSRDPRAKERRKYGLKKARKAPQFSKR). Residues 97–115 (ADNRKPLKTEGHLSRDPRA) are compositionally biased toward basic and acidic residues. Over residues 116–135 (KERRKYGLKKARKAPQFSKR) the composition is skewed to basic residues.

Belongs to the universal ribosomal protein uS9 family.

In Prochlorococcus marinus (strain MIT 9303), this protein is Small ribosomal subunit protein uS9.